Consider the following 113-residue polypeptide: Defense protein 2 (113 aa).

The protein belongs to the attacin/sarcotoxin-2 family.

Its subcellular location is the secreted. Functionally, has antibacterial activity against both Gram-positive and Gram-negative bacteria. This Lonomia obliqua (Moth) protein is Defense protein 2.